The sequence spans 61 residues: Large ribosomal subunit protein uL30 (61 aa).

The protein belongs to the universal ribosomal protein uL30 family. Part of the 50S ribosomal subunit.

This Corynebacterium efficiens (strain DSM 44549 / YS-314 / AJ 12310 / JCM 11189 / NBRC 100395) protein is Large ribosomal subunit protein uL30.